We begin with the raw amino-acid sequence, 561 residues long: Carbohydrate sulfotransferase 15 (561 aa).

The Cytoplasmic segment spans residues 1 to 80 (MRHCINCCVQ…FLRFRKGKRC (80 aa)). Residues 81–101 (SLVFGLIIMTLVMASYILSGA) form a helical; Signal-anchor for type II membrane protein membrane-spanning segment. The Lumenal segment spans residues 102-561 (HQELLISSPF…DDEAFAWKTT (460 aa)). 263-267 (KCGTT) provides a ligand contact to 3'-phosphoadenylyl sulfate. N-linked (GlcNAc...) asparagine glycosylation occurs at asparagine 364. 3'-phosphoadenylyl sulfate contacts are provided by arginine 392 and serine 400.

It belongs to the sulfotransferase 1 family. As to quaternary structure, homodimer; disulfide-linked (Potential). The relevance of homodimerization is however unsure. May interact with phosphorylated proteins in resting B-cells, including HCK. A divalent metal cation is required as a cofactor. The cofactor is glutathione. Glycosylated.

The protein resides in the golgi apparatus membrane. It catalyses the reaction dermatan 4'-sulfate + n 3'-phosphoadenylyl sulfate = dermatan 4',6'-bissulfate + n adenosine 3',5'-bisphosphate + n H(+). The enzyme catalyses chondroitin 4'-sulfate + n 3'-phosphoadenylyl sulfate = chondroitin 4',6'-bissulfate + n adenosine 3',5'-bisphosphate + n H(+). With respect to regulation, inhibited by phenyl beta-GalNAc(4,6-SO(4)). Its function is as follows. Sulfotransferase that transfers sulfate from 3'-phosphoadenosine 5'-phosphosulfate (PAPS) to the C-6 hydroxyl group of the GalNAc 4-sulfate residue of chondroitin sulfate A and forms chondroitin sulfate E containing GlcA-GalNAc(4,6-SO(4)) repeating units. It also transfers sulfate to a unique non-reducing terminal sequence, GalNAc(4SO4)-GlcA(2SO4)-GalNAc(6SO4), to yield a highly sulfated structure similar to the structure found in thrombomodulin chondroitin sulfate. May also act as a B-cell receptor involved in BCR ligation-mediated early activation that mediate regulatory signals key to B-cell development and/or regulation of B-cell-specific RAG expression; however such results are unclear in vivo. The protein is Carbohydrate sulfotransferase 15 (Chst15) of Mus musculus (Mouse).